Reading from the N-terminus, the 350-residue chain is Bifunctional nitrilase/nitrile hydratase NIT4B (350 aa).

In terms of domain architecture, CN hydrolase spans 30 to 302 (VRATVVQAST…EALISADLDL (273 aa)). Glu70 (proton acceptor) is an active-site residue. Residue Lys157 is part of the active site. The Nucleophile role is filled by Cys191.

The protein belongs to the carbon-nitrogen hydrolase superfamily. Nitrilase family. In terms of tissue distribution, highly expressed in leaves and cotyledons, lower expression in stems and roots.

The enzyme catalyses L-asparagine = 3-cyano-L-alanine + H2O. The catalysed reaction is 3-cyano-L-alanine + 2 H2O = L-aspartate + NH4(+). Its function is as follows. Involved in the cyanide detoxification pathway. Has nitrilase and nitrile-hydratase activity in the ratio 3.3:1, producing both asparagine and aspartic acid from beta-cyano-L-alanine (Ala(CN)). Can also use 3-phenylpropionitrile as substrate, but not indole-3-acetonitrile. The sequence is that of Bifunctional nitrilase/nitrile hydratase NIT4B (NIT4B) from Lupinus angustifolius (Narrow-leaved blue lupine).